A 43-amino-acid chain; its full sequence is Cuticle protein CP434 (43 aa).

Tandem repeats lie at residues 1-18 (ALVGPSGMILADGTPVQF) and 25-42 (VLTGPSGIVFSNGQNIQL).

As to expression, calcified shell.

The sequence is that of Cuticle protein CP434 from Cancer pagurus (Rock crab).